The primary structure comprises 380 residues: Cytochrome b (380 aa).

4 helical membrane-spanning segments follow: residues 34–54 (FGSLLAVCLMTQILTGLLLAM), 78–99 (WLIRNLHANGASFFFICIFLHI), 114–134 (WNTGVILLLTLMATAFVGYVL), and 179–199 (FFALHFLLPFAIAGITIIHLT). 2 residues coordinate heme b: H84 and H98. Positions 183 and 197 each coordinate heme b. H202 contributes to the a ubiquinone binding site. The next 4 membrane-spanning stretches (helical) occupy residues 227 to 247 (FKDILGLTLMLTPFLTLALFS), 289 to 309 (LGGVLALAASVLILFLIPFLH), 321 to 341 (LSQTLFWLLVANLLILTWIGS), and 348 to 368 (FIIIGQMASLSYFTILLILFP).

The protein belongs to the cytochrome b family. The cytochrome bc1 complex contains 11 subunits: 3 respiratory subunits (MT-CYB, CYC1 and UQCRFS1), 2 core proteins (UQCRC1 and UQCRC2) and 6 low-molecular weight proteins (UQCRH/QCR6, UQCRB/QCR7, UQCRQ/QCR8, UQCR10/QCR9, UQCR11/QCR10 and a cleavage product of UQCRFS1). This cytochrome bc1 complex then forms a dimer. Heme b serves as cofactor.

Its subcellular location is the mitochondrion inner membrane. Functionally, component of the ubiquinol-cytochrome c reductase complex (complex III or cytochrome b-c1 complex) that is part of the mitochondrial respiratory chain. The b-c1 complex mediates electron transfer from ubiquinol to cytochrome c. Contributes to the generation of a proton gradient across the mitochondrial membrane that is then used for ATP synthesis. This chain is Cytochrome b (MT-CYB), found in Gallus gallus (Chicken).